The following is a 131-amino-acid chain: Large ribosomal subunit protein bL17 (131 aa).

Belongs to the bacterial ribosomal protein bL17 family. In terms of assembly, part of the 50S ribosomal subunit. Contacts protein L32.

In Sodalis glossinidius (strain morsitans), this protein is Large ribosomal subunit protein bL17.